The chain runs to 540 residues: [Co(II) methylated amine-specific corrinoid protein] reductase (540 aa).

2 consecutive 4Fe-4S ferredoxin-type domains span residues 471-500 (IILEVPVEKCVYCKKCVKECPEAALEIVER) and 504-535 (RIAKYDSQKCLGTSCRRCVGVCPEDAIDITKL). 8 residues coordinate [4Fe-4S] cluster: C480, C483, C486, C490, C513, C518, C521, and C525.

Monomer. It depends on [4Fe-4S] cluster as a cofactor.

It catalyses the reaction 2 Co(II)-[methylamine-specific corrinoid protein] + AH2 + ATP + H2O = 2 Co(I)-[methylamine-specific corrinoid protein] + A + ADP + phosphate + 3 H(+). It carries out the reaction 2 Co(II)-[dimethylamine-specific corrinoid protein] + AH2 + ATP + H2O = 2 Co(I)-[dimethylamine-specific corrinoid protein] + A + ADP + phosphate + 3 H(+). The enzyme catalyses 2 Co(II)-[trimethylamine-specific corrinoid protein] + AH2 + ATP + H2O = 2 Co(I)-[trimethylamine-specific corrinoid protein] + A + ADP + phosphate + 3 H(+). It participates in one-carbon metabolism; methanogenesis from methylamine. The protein operates within one-carbon metabolism; methanogenesis from dimethylamine. It functions in the pathway one-carbon metabolism; methanogenesis from trimethylamine. Its function is as follows. Reductase required for the activation of corrinoid-dependent methylamine methyltransferase reactions during methanogenesis. Mediates the ATP-dependent reduction of corrinoid proteins from the inactive cobalt(II) state to the active cobalt(I) state. Acts on the corrinoid proteins involved in methanogenesis from monomethylamine (MMA), dimethylamine (DMA) and trimethylamine (TMA), namely MtmC, MtbC and MttC, respectively. This Methanosarcina barkeri protein is [Co(II) methylated amine-specific corrinoid protein] reductase.